The sequence spans 400 residues: Bifunctional enzyme IspD/IspF (400 aa).

Residues 1-244 (MSHRVLGTER…LLKERDKMDI (244 aa)) are 2-C-methyl-D-erythritol 4-phosphate cytidylyltransferase. Residues 245 to 400 (RTGNGYDVHR…ALATVTLVRT (156 aa)) form a 2-C-methyl-D-erythritol 2,4-cyclodiphosphate synthase region. Residues aspartate 251 and histidine 253 each contribute to the a divalent metal cation site. 4-CDP-2-C-methyl-D-erythritol 2-phosphate is bound by residues 251–253 (DVH) and 277–278 (HS). Residue histidine 285 participates in a divalent metal cation binding. Residues 299 to 301 (DIG), 375 to 378 (TTSE), phenylalanine 382, and arginine 385 each bind 4-CDP-2-C-methyl-D-erythritol 2-phosphate.

It in the N-terminal section; belongs to the IspD/TarI cytidylyltransferase family. IspD subfamily. The protein in the C-terminal section; belongs to the IspF family. A divalent metal cation is required as a cofactor.

It carries out the reaction 2-C-methyl-D-erythritol 4-phosphate + CTP + H(+) = 4-CDP-2-C-methyl-D-erythritol + diphosphate. The catalysed reaction is 4-CDP-2-C-methyl-D-erythritol 2-phosphate = 2-C-methyl-D-erythritol 2,4-cyclic diphosphate + CMP. Its pathway is isoprenoid biosynthesis; isopentenyl diphosphate biosynthesis via DXP pathway; isopentenyl diphosphate from 1-deoxy-D-xylulose 5-phosphate: step 2/6. It participates in isoprenoid biosynthesis; isopentenyl diphosphate biosynthesis via DXP pathway; isopentenyl diphosphate from 1-deoxy-D-xylulose 5-phosphate: step 4/6. In terms of biological role, bifunctional enzyme that catalyzes the formation of 4-diphosphocytidyl-2-C-methyl-D-erythritol from CTP and 2-C-methyl-D-erythritol 4-phosphate (MEP) (IspD), and catalyzes the conversion of 4-diphosphocytidyl-2-C-methyl-D-erythritol 2-phosphate (CDP-ME2P) to 2-C-methyl-D-erythritol 2,4-cyclodiphosphate (ME-CPP) with a corresponding release of cytidine 5-monophosphate (CMP) (IspF). This chain is Bifunctional enzyme IspD/IspF, found in Dinoroseobacter shibae (strain DSM 16493 / NCIMB 14021 / DFL 12).